The primary structure comprises 48 residues: MGGKGGKGGKGLGKVGAKKRHSRRVIRENIQGITKPAIRRLARRGGVK.

Over residues Met1–Lys14 the composition is skewed to gly residues. Positions Met1 to Arg23 are disordered.

It belongs to the histone H4 family. As to quaternary structure, the nucleosome is a histone octamer containing two molecules each of H2A, H2B, H3 and H4 assembled in one H3-H4 heterotetramer and two H2A-H2B heterodimers. The octamer wraps approximately 147 bp of DNA.

The protein localises to the nucleus. It is found in the chromosome. Its function is as follows. Core component of nucleosome. Nucleosomes wrap and compact DNA into chromatin, limiting DNA accessibility to the cellular machineries which require DNA as a template. Histones thereby play a central role in transcription regulation, DNA repair, DNA replication and chromosomal stability. DNA accessibility is regulated via a complex set of post-translational modifications of histones, also called histone code, and nucleosome remodeling. The chain is Histone H4 from Blepharisma japonicum.